Consider the following 874-residue polypeptide: Alanine--tRNA ligase (874 aa).

Residues H562, H566, C665, and H669 each coordinate Zn(2+).

This sequence belongs to the class-II aminoacyl-tRNA synthetase family. Zn(2+) serves as cofactor.

It localises to the cytoplasm. It carries out the reaction tRNA(Ala) + L-alanine + ATP = L-alanyl-tRNA(Ala) + AMP + diphosphate. In terms of biological role, catalyzes the attachment of alanine to tRNA(Ala) in a two-step reaction: alanine is first activated by ATP to form Ala-AMP and then transferred to the acceptor end of tRNA(Ala). Also edits incorrectly charged Ser-tRNA(Ala) and Gly-tRNA(Ala) via its editing domain. In Pseudomonas putida (strain W619), this protein is Alanine--tRNA ligase.